Here is a 246-residue protein sequence, read N- to C-terminus: Probable transcriptional regulatory protein KPK_1906 (246 aa).

Belongs to the TACO1 family.

Its subcellular location is the cytoplasm. In Klebsiella pneumoniae (strain 342), this protein is Probable transcriptional regulatory protein KPK_1906.